Consider the following 129-residue polypeptide: Large ribosomal subunit protein bL20 (129 aa).

It belongs to the bacterial ribosomal protein bL20 family.

In terms of biological role, binds directly to 23S ribosomal RNA and is necessary for the in vitro assembly process of the 50S ribosomal subunit. It is not involved in the protein synthesizing functions of that subunit. In Kineococcus radiotolerans (strain ATCC BAA-149 / DSM 14245 / SRS30216), this protein is Large ribosomal subunit protein bL20.